The chain runs to 932 residues: Protocadherin gamma-A6 (932 aa).

A signal peptide spans methionine 1–alanine 29. Cadherin domains are found at residues glutamine 30 to phenylalanine 133, leucine 134 to phenylalanine 242, threonine 243 to valine 347, valine 348 to phenylalanine 452, proline 453 to isoleucine 562, and aspartate 570 to alanine 682. At glutamine 30–tyrosine 692 the chain is on the extracellular side. The N-linked (GlcNAc...) asparagine glycan is linked to asparagine 81. 2 N-linked (GlcNAc...) asparagine glycosylation sites follow: asparagine 419 and asparagine 545. A glycan (N-linked (GlcNAc...) asparagine) is linked at asparagine 685. Residues leucine 693–alanine 713 traverse the membrane as a helical segment. At leucine 714–lysine 932 the chain is on the cytoplasmic side. Disordered regions lie at residues proline 804 to asparagine 841 and alanine 902 to lysine 932. Residues glutamine 806–asparagine 841 show a composition bias toward polar residues. Basic residues predominate over residues asparagine 922 to lysine 932.

The protein localises to the cell membrane. Potential calcium-dependent cell-adhesion protein. May be involved in the establishment and maintenance of specific neuronal connections in the brain. This Homo sapiens (Human) protein is Protocadherin gamma-A6 (PCDHGA6).